The sequence spans 87 residues: Large ribosomal subunit protein bL27 (87 aa).

Residues 1–21 form a disordered region; it reads MAHKKAGGSSRNGRDSESKRL.

It belongs to the bacterial ribosomal protein bL27 family.

This Paraburkholderia xenovorans (strain LB400) protein is Large ribosomal subunit protein bL27.